Consider the following 100-residue polypeptide: Large ribosomal subunit protein uL23 (100 aa).

The protein belongs to the universal ribosomal protein uL23 family. In terms of assembly, part of the 50S ribosomal subunit. Contacts protein L29, and trigger factor when it is bound to the ribosome.

Functionally, one of the early assembly proteins it binds 23S rRNA. One of the proteins that surrounds the polypeptide exit tunnel on the outside of the ribosome. Forms the main docking site for trigger factor binding to the ribosome. This is Large ribosomal subunit protein uL23 from Shewanella amazonensis (strain ATCC BAA-1098 / SB2B).